The following is a 120-amino-acid chain: Basic phospholipase A2 homolog LmutTX (120 aa).

7 disulfides stabilise this stretch: Cys26–Cys114, Cys28–Cys44, Cys43–Cys95, Cys49–Cys120, Cys50–Cys88, Cys57–Cys81, and Cys75–Cys86.

Belongs to the phospholipase A2 family. Group II subfamily. K49 sub-subfamily. In terms of assembly, monomer. In terms of tissue distribution, expressed by the venom gland.

Its subcellular location is the secreted. Functionally, snake venom phospholipase A2 homolog that lacks enzymatic activity. Shows moderate cytotoxicity against C2C12 myotubes (activity above 200 ug/mL). Also shows antibacterial activity against both Gram-positive and Gram-negative bacteria. A model of myotoxic mechanism has been proposed: an apo Lys49-PLA2 is activated by the entrance of a hydrophobic molecule (e.g. fatty acid) at the hydrophobic channel of the protein leading to a reorientation of a monomer. This reorientation causes a transition between 'inactive' to 'active' states, causing alignment of C-terminal and membrane-docking sites (MDoS) side-by-side and putting the membrane-disruption sites (MDiS) in the same plane, exposed to solvent and in a symmetric position for both monomers. The MDoS region stabilizes the toxin on membrane by the interaction of charged residues with phospholipid head groups. Subsequently, the MDiS region destabilizes the membrane with penetration of hydrophobic residues. This insertion causes a disorganization of the membrane, allowing an uncontrolled influx of ions (i.e. calcium and sodium), and eventually triggering irreversible intracellular alterations and cell death. This chain is Basic phospholipase A2 homolog LmutTX, found in Lachesis muta muta (Bushmaster).